A 158-amino-acid polypeptide reads, in one-letter code: Transcriptional repressor NrdR (158 aa).

Residues 3-34 (CPSCQNTDSRVLESRAADAGRSVRRRRECLHC) fold into a zinc finger. One can recognise an ATP-cone domain in the interval 49–139 (ITVLKRNGNR…VYRDFRGVND (91 aa)).

Belongs to the NrdR family. Zn(2+) serves as cofactor.

Negatively regulates transcription of bacterial ribonucleotide reductase nrd genes and operons by binding to NrdR-boxes. The sequence is that of Transcriptional repressor NrdR from Prochlorococcus marinus (strain MIT 9313).